The chain runs to 78 residues: MKLTCMMIVAVLFLTAWTFATADDSGNGLENLFSNAHHQMKNPEASKLNKRWCKQSGEMCNLLDQNCCDGYCIVLVCT.

The N-terminal stretch at 1 to 22 (MKLTCMMIVAVLFLTAWTFATA) is a signal peptide. The propeptide occupies 23 to 49 (DDSGNGLENLFSNAHHQMKNPEASKLN). Disulfide bonds link C53-C68, C60-C72, and C67-C77. Position 59 is a methionine sulfoxide; partial (M59).

Belongs to the conotoxin O1 superfamily. In terms of tissue distribution, expressed by the venom duct. Is present in all duct parts with a highest content in part 4 (distal part near the pharynx).

It is found in the secreted. Its function is as follows. Delta-conotoxins bind to site 6 of voltage-gated sodium channels (Nav) and inhibit the inactivation process. Binding of this toxin is strongly calcium-dependent but not voltage-dependent. The binding site is most likely on the extracellular side of the sodium channel. Binds receptor sites on both mollusk and rat central nervous system, but despite its high affinity binding to rat sodium channel, it has no functional effect in vivo and in vitro on it. Also has no effect on Gambusia fish. Is important in mollusk for the paralysis of the prey. Upon injection of the peptide, a subordinate lobster assumes an exaggerated dominant posture (of a 'King-Kong' lobster!). This chain is Delta-conotoxin TxVIA, found in Conus textile (Cloth-of-gold cone).